The chain runs to 768 residues: Translation factor GUF1 homolog, mitochondrial (768 aa).

The transit peptide at 1 to 29 (MRLWNRFSRLGNLLCACAACGCSFTPWRC) directs the protein to the mitochondrion. A tr-type G domain is found at 110–293 (SNIRNVAVVA…AIIERVPSPS (184 aa)). Residues 119–126 (AHVDHGKT), 184–188 (DTPGH), and 238–241 (TKMD) each bind GTP.

This sequence belongs to the TRAFAC class translation factor GTPase superfamily. Classic translation factor GTPase family. LepA subfamily.

It is found in the mitochondrion inner membrane. The catalysed reaction is GTP + H2O = GDP + phosphate + H(+). In terms of biological role, promotes mitochondrial protein synthesis. May act as a fidelity factor of the translation reaction, by catalyzing a one-codon backward translocation of tRNAs on improperly translocated ribosomes. Binds to mitochondrial ribosomes in a GTP-dependent manner. The polypeptide is Translation factor GUF1 homolog, mitochondrial (Trypanosoma brucei brucei (strain 927/4 GUTat10.1)).